Consider the following 911-residue polypeptide: Chromatin assembly factor 1 subunit A (911 aa).

The segment at 1 to 31 (MLEEPEAATRTAAAVDCKDRPGFPVKRLIQA) is binds PCNA. Positions 166–200 (HMEEEPGSPGDPKRTGDCQAGSLQSCPELTPGSRT) are disordered. The segment at 176–327 (DPKRTGDCQA…LHRDREQQRE (152 aa)) is binds CBX1 and CBX3 chromo shadow domains. Over residues 186-200 (GSLQSCPELTPGSRT) the composition is skewed to polar residues. Ser-190 and Ser-208 each carry phosphoserine. The PxVxL motif motif lies at 217–230 (FIEKVPVVVLEDIL). 2 disordered regions span residues 250–408 (SESE…EEEK) and 578–618 (DSDD…VPHG). The segment covering 265–281 (LSHSSTNSSSPTSSPEG) has biased composition (low complexity). Residue Ser-293 is modified to Phosphoserine. Over residues 310 to 408 (STEKGRSKLH…EEKRLREEEK (99 aa)) the composition is skewed to basic and acidic residues. 2 stretches are compositionally biased toward acidic residues: residues 578–589 (DSDDEWEEEEPG) and 597–612 (GDED…EDDG). The tract at residues 621–657 (SEDEGVTEECADPENHKVHQKLKAKEWDELLAKGKRF) is necessary for homodimerization and competence for chromatin assembly. A binds to p60 region spans residues 639–911 (HQKLKAKEWD…APIPAPTLCK (273 aa)). Phosphoserine is present on Ser-776. Disordered stretches follow at residues 819–843 (PSAP…MLLK) and 866–886 (GSGD…DDTD). Positions 827–839 (GSASTEGPGQSTP) are enriched in polar residues. Thr-838 is modified (phosphothreonine). Positions 876-886 (DTEEDEEDDTD) are enriched in acidic residues.

This sequence belongs to the CHAF1A family. In terms of assembly, homodimer. Part of the CAF-1 complex that contains RBBP4, CHAF1B and CHAF1A. CHAF1A binds directly to CHAF1B. Only minor amounts of RBBP4 are complexed with CHAF1A and CHAF1B in G1 phase. Interacts with PCNA; the interaction is direct. Interacts (via the PxVxL motif) with CBX5; the interaction is direct. Interacts with MBD1. Interacts with histones H3.1, H3.2 and H3.1t.

The protein localises to the nucleus. Functionally, acts as a component of the histone chaperone complex chromatin assembly factor 1 (CAF-1), which assembles histone octamers onto DNA during replication and repair. CAF-1 performs the first step of the nucleosome assembly process, bringing newly synthesized histones H3 and H4 to replicating DNA; histones H2A/H2B can bind to this chromatin precursor subsequent to DNA replication to complete the histone octamer. It may play a role in heterochromatin maintenance in proliferating cells by bringing newly synthesized cbx proteins to heterochromatic DNA replication foci. In Mus musculus (Mouse), this protein is Chromatin assembly factor 1 subunit A.